A 915-amino-acid chain; its full sequence is Coronin-7 (915 aa).

4 WD repeats span residues 75–115 (CHSD…QALP), 124–163 (PEDAQVEVLQFHPTADGVLLSAAGRAVKVWDATKQQPLTE), 166–205 (THGDLVQGAAWSRDGALLGTTCKDKQLRIFDPRAKPEAAQ), and 209–253 (AHEN…AALT). A disordered region spans residues 396-456 (TSCLAPPAEL…TSPSQRSLQS (61 aa)). 2 stretches are compositionally biased toward low complexity: residues 399–413 (LAPPAELTPATAQPA) and 420–450 (SSTPSSLTSPSTPSSLGPSLTSTSGIGTSPS). Phosphoserine is present on residues S453 and S456. Residue K463 forms a Glycyl lysine isopeptide (Lys-Gly) (interchain with G-Cter in ubiquitin) linkage. 4 WD repeats span residues 533 to 573 (QNGV…LQEV), 583 to 623 (GHTE…EQLR), 626 to 665 (GHRDQIFGLAWSPDGQQLATVCKDGRLRIYEPRGSPEPLQ), and 719 to 759 (DVAP…PFFL). Positions 850–915 (PPGMTPVSQA…FEGVDEDEWD (66 aa)) are disordered. A compositionally biased stretch (low complexity) spans 859–869 (APREAPARRAP). Basic and acidic residues predominate over residues 874–886 (LEEKSDQQKKEEL). A Phosphoserine modification is found at S905.

The protein belongs to the WD repeat coronin family. As to quaternary structure, interacts with clathrin adapter AP1 complex. This interaction takes place at Golgi membranes and not AP1-positive endosomal membranes. Interacts (when ubiquitinated at Lys-463) with EPS15. In terms of processing, the membrane-associated form is phosphorylated on tyrosine residues. Post-translationally, ubiquitinated via 'Lys-33'-linked ubiquitin chains by the BCR(KLHL20) E3 ubiquitin ligase complex: 'Lys-33'-linked ubiquitination promotes interaction with EPS15 and facilitates actin polymerization at the trans-Golgi network, thereby facilitating post-Golgi trafficking. Deubiquitinated by ZRANB1/TRABID.

The protein localises to the golgi apparatus membrane. Its subcellular location is the golgi apparatus. It is found in the trans-Golgi network. It localises to the cytoplasmic vesicle. The protein resides in the cytoplasm. The protein localises to the cytosol. Functionally, F-actin regulator involved in anterograde Golgi to endosome transport: upon ubiquitination via 'Lys-33'-linked ubiquitin chains by the BCR(KLHL20) E3 ubiquitin ligase complex, interacts with EPS15 and localizes to the trans-Golgi network, where it promotes actin polymerization, thereby facilitating post-Golgi trafficking. May play a role in the maintenance of the Golgi apparatus morphology. This chain is Coronin-7 (CORO7), found in Bos taurus (Bovine).